The following is a 296-amino-acid chain: Ribosomal RNA small subunit methyltransferase H (296 aa).

S-adenosyl-L-methionine contacts are provided by residues 30–32, Asp-49, Phe-77, Asp-95, and Gln-102; that span reads GGH.

This sequence belongs to the methyltransferase superfamily. RsmH family.

The protein localises to the cytoplasm. The catalysed reaction is cytidine(1402) in 16S rRNA + S-adenosyl-L-methionine = N(4)-methylcytidine(1402) in 16S rRNA + S-adenosyl-L-homocysteine + H(+). Specifically methylates the N4 position of cytidine in position 1402 (C1402) of 16S rRNA. The sequence is that of Ribosomal RNA small subunit methyltransferase H from Hydrogenobaculum sp. (strain Y04AAS1).